A 296-amino-acid chain; its full sequence is NAD kinase (296 aa).

The active-site Proton acceptor is D72. NAD(+) is bound by residues 72–73 (DG), 146–147 (ND), R157, K174, D176, 187–192 (TAYALS), and Q247.

This sequence belongs to the NAD kinase family. A divalent metal cation is required as a cofactor.

The protein resides in the cytoplasm. The enzyme catalyses NAD(+) + ATP = ADP + NADP(+) + H(+). Its function is as follows. Involved in the regulation of the intracellular balance of NAD and NADP, and is a key enzyme in the biosynthesis of NADP. Catalyzes specifically the phosphorylation on 2'-hydroxyl of the adenosine moiety of NAD to yield NADP. This Pseudomonas fluorescens (strain SBW25) protein is NAD kinase.